Consider the following 296-residue polypeptide: Thiamine-monophosphate kinase (296 aa).

Mg(2+)-binding residues include aspartate 32, threonine 46, and aspartate 48. Residue aspartate 55 coordinates substrate. Mg(2+)-binding residues include aspartate 76 and aspartate 121. Residues 120-121 (GD) and arginine 144 each bind ATP. A Mg(2+)-binding site is contributed by aspartate 206. Serine 208 contributes to the ATP binding site. Aspartate 209 contributes to the Mg(2+) binding site. Residue tyrosine 293 coordinates substrate.

It belongs to the thiamine-monophosphate kinase family.

The catalysed reaction is thiamine phosphate + ATP = thiamine diphosphate + ADP. The protein operates within cofactor biosynthesis; thiamine diphosphate biosynthesis; thiamine diphosphate from thiamine phosphate: step 1/1. Catalyzes the ATP-dependent phosphorylation of thiamine-monophosphate (TMP) to form thiamine-pyrophosphate (TPP), the active form of vitamin B1. The chain is Thiamine-monophosphate kinase from Archaeoglobus fulgidus (strain ATCC 49558 / DSM 4304 / JCM 9628 / NBRC 100126 / VC-16).